We begin with the raw amino-acid sequence, 217 residues long: Small ribosomal subunit protein uS3 (217 aa).

The KH type-2 domain occupies 38–106 (VRKYIETALK…RVHINIIEIK (69 aa)).

It belongs to the universal ribosomal protein uS3 family. Part of the 30S ribosomal subunit. Forms a tight complex with proteins S10 and S14.

Functionally, binds the lower part of the 30S subunit head. Binds mRNA in the 70S ribosome, positioning it for translation. The chain is Small ribosomal subunit protein uS3 from Lysinibacillus sphaericus (strain C3-41).